Here is a 312-residue protein sequence, read N- to C-terminus: tRNA pseudouridine synthase B (312 aa).

Residue aspartate 38 is the Nucleophile of the active site.

Belongs to the pseudouridine synthase TruB family. Type 1 subfamily.

It catalyses the reaction uridine(55) in tRNA = pseudouridine(55) in tRNA. In terms of biological role, responsible for synthesis of pseudouridine from uracil-55 in the psi GC loop of transfer RNAs. The polypeptide is tRNA pseudouridine synthase B (Syntrophus aciditrophicus (strain SB)).